Consider the following 88-residue polypeptide: UPF0223 protein BH2638 (88 aa).

This sequence belongs to the UPF0223 family.

This Halalkalibacterium halodurans (strain ATCC BAA-125 / DSM 18197 / FERM 7344 / JCM 9153 / C-125) (Bacillus halodurans) protein is UPF0223 protein BH2638.